We begin with the raw amino-acid sequence, 101 residues long: Small ribosomal subunit protein uS10 (101 aa).

It belongs to the universal ribosomal protein uS10 family. In terms of assembly, part of the 30S ribosomal subunit.

In terms of biological role, involved in the binding of tRNA to the ribosomes. In Flavobacterium johnsoniae (strain ATCC 17061 / DSM 2064 / JCM 8514 / BCRC 14874 / CCUG 350202 / NBRC 14942 / NCIMB 11054 / UW101) (Cytophaga johnsonae), this protein is Small ribosomal subunit protein uS10.